The sequence spans 242 residues: Probable transcriptional regulatory protein XCC3027 (242 aa).

The protein belongs to the TACO1 family.

Its subcellular location is the cytoplasm. This chain is Probable transcriptional regulatory protein XCC3027, found in Xanthomonas campestris pv. campestris (strain ATCC 33913 / DSM 3586 / NCPPB 528 / LMG 568 / P 25).